We begin with the raw amino-acid sequence, 600 residues long: Chaperone protein DnaK (600 aa).

Phosphothreonine; by autocatalysis is present on Thr-175. The span at 569 to 578 (SFAQATAQQA) shows a compositional bias: low complexity. The segment at 569-600 (SFAQATAQQANTSESDPKADDSNTIDAEIKQD) is disordered. The segment covering 583–600 (SDPKADDSNTIDAEIKQD) has biased composition (basic and acidic residues).

The protein belongs to the heat shock protein 70 family.

Its function is as follows. Acts as a chaperone. This chain is Chaperone protein DnaK, found in Mesomycoplasma hyopneumoniae (strain J / ATCC 25934 / NCTC 10110) (Mycoplasma hyopneumoniae).